Consider the following 170-residue polypeptide: Small ribosomal subunit protein uS3mA (170 aa).

The N-terminal 30 residues, 1-30 (MAAPVMSALGRLQGLIRTERSLLTHVQSRC), are a transit peptide targeting the mitochondrion.

This sequence belongs to the universal ribosomal protein uS3 family. Component of the mitochondrial ribosome small subunit (28S) which comprises a 12S rRNA and about 30 distinct proteins.

It localises to the mitochondrion. This Xenopus laevis (African clawed frog) protein is Small ribosomal subunit protein uS3mA (mrps24-a).